The following is a 249-amino-acid chain: MQTSLHENGPVFNIKNFSGPLDLLLSLVKDKNIDIFEINLVELATQYLEIIKKLQDDKIDLASDYLVMAATLLQIKASMALQGEKVDEEVELDKERLLMKLAEYKQFKEISQILRYQEEKRKEIFLKKSSPAEEFIRPIDEKILDGRSSMVQLVLTLRQMFERTFAEKLRRTKIDNFNLTPSDQVLYIKKLFNENEIVTFEMIFSLPSLSHFVITLIALLDLSRRQELLIYQDQQFGTIRIEKGPNYEE.

Belongs to the ScpA family. As to quaternary structure, component of a cohesin-like complex composed of ScpA, ScpB and the Smc homodimer, in which ScpA and ScpB bind to the head domain of Smc. The presence of the three proteins is required for the association of the complex with DNA.

It is found in the cytoplasm. Its function is as follows. Participates in chromosomal partition during cell division. May act via the formation of a condensin-like complex containing Smc and ScpB that pull DNA away from mid-cell into both cell halves. This chain is Segregation and condensation protein A, found in Mycoplasmopsis pulmonis (strain UAB CTIP) (Mycoplasma pulmonis).